We begin with the raw amino-acid sequence, 560 residues long: Membrane protein insertase YidC (560 aa).

A helical transmembrane segment spans residues 1–21 (MDIKRTILIAALAVVSYVMVL). The disordered stretch occupies residues 42–66 (VAPGLPDGVPAGNNGASADVPSANA). Helical transmembrane passes span 341–361 (LELT…FWLL), 367–387 (LLGN…GLFF), 437–457 (LGGC…YWVL), 468–488 (WILW…PIIM), and 515–535 (PIIF…YWVV).

It belongs to the OXA1/ALB3/YidC family. Type 1 subfamily. Interacts with the Sec translocase complex via SecD. Specifically interacts with transmembrane segments of nascent integral membrane proteins during membrane integration.

It is found in the cell inner membrane. Functionally, required for the insertion and/or proper folding and/or complex formation of integral membrane proteins into the membrane. Involved in integration of membrane proteins that insert both dependently and independently of the Sec translocase complex, as well as at least some lipoproteins. Aids folding of multispanning membrane proteins. This chain is Membrane protein insertase YidC, found in Pseudomonas putida (strain ATCC 47054 / DSM 6125 / CFBP 8728 / NCIMB 11950 / KT2440).